The chain runs to 362 residues: Phosphoserine aminotransferase (362 aa).

L-glutamate is bound at residue arginine 43. Pyridoxal 5'-phosphate-binding positions include 77–78, tryptophan 103, threonine 153, aspartate 173, and glutamine 196; that span reads AT. Lysine 197 carries the N6-(pyridoxal phosphate)lysine modification. 238–239 is a pyridoxal 5'-phosphate binding site; sequence NT.

It belongs to the class-V pyridoxal-phosphate-dependent aminotransferase family. SerC subfamily. Homodimer. The cofactor is pyridoxal 5'-phosphate.

It localises to the cytoplasm. The catalysed reaction is O-phospho-L-serine + 2-oxoglutarate = 3-phosphooxypyruvate + L-glutamate. It carries out the reaction 4-(phosphooxy)-L-threonine + 2-oxoglutarate = (R)-3-hydroxy-2-oxo-4-phosphooxybutanoate + L-glutamate. Its pathway is amino-acid biosynthesis; L-serine biosynthesis; L-serine from 3-phospho-D-glycerate: step 2/3. It functions in the pathway cofactor biosynthesis; pyridoxine 5'-phosphate biosynthesis; pyridoxine 5'-phosphate from D-erythrose 4-phosphate: step 3/5. In terms of biological role, catalyzes the reversible conversion of 3-phosphohydroxypyruvate to phosphoserine and of 3-hydroxy-2-oxo-4-phosphonooxybutanoate to phosphohydroxythreonine. The protein is Phosphoserine aminotransferase of Xylella fastidiosa (strain 9a5c).